Here is a 195-residue protein sequence, read N- to C-terminus: Myelin-associated neurite-outgrowth inhibitor (195 aa).

Met-1 bears the N-acetylmethionine mark. Over 1 to 18 (MNPVYSPGSSGVPYANAK) the chain is Cytoplasmic. At Ser-6 the chain carries Phosphoserine. Residues 19-42 (GIGYPAGFPMGYAAAAPAYSPNMY) traverse the membrane as a helical segment. At 43–142 (PGANPTFQTG…PAPIPPPRGN (100 aa)) the chain is on the extracellular side. N-linked (GlcNAc...) asparagine glycosylation occurs at Asn-46. The helical transmembrane segment at 143–164 (GVTMGMVAGTTMAMSAGTLLTA) threads the bilayer. Topologically, residues 165–195 (HSPTPVAPHPVTVPTYRAPGTPTYSYVPPQW) are cytoplasmic.

This sequence belongs to the FAM168 family. As to quaternary structure, may form homodimers. May interact with DAZAP2, FAM168A, PRDX6, RBM6, TMTC1 and YPEL2. Interacts with CDC27. N-glycosylated. Expressed in the brain, within neuronal axonal fibers and associated with myelin sheets (at protein level). Expression tends to be lower in the brain of Alzheimer disease patients compared to healthy individuals (at protein level).

Its subcellular location is the cytoplasm. The protein localises to the perinuclear region. It is found in the cell membrane. It localises to the cell projection. The protein resides in the axon. Inhibitor of neuronal axonal outgrowth. Acts as a negative regulator of CDC42 and STAT3 and a positive regulator of STMN2. Positive regulator of CDC27. This is Myelin-associated neurite-outgrowth inhibitor (FAM168B) from Homo sapiens (Human).